Consider the following 290-residue polypeptide: PIH1 domain-containing protein 1 (290 aa).

A phosphoserine mark is found at serine 12 and serine 173.

Belongs to the PIH1 family. Component of the R2TP complex composed at least of RUVBL1, RUVBL2, RPAP3 and PIHD1. Component of the PAQosome complex which is responsible for the biogenesis of several protein complexes and which consists of R2TP complex members RUVBL1, RUVBL2, RPAP3 and PIH1D1, URI complex members PFDN2, PFDN6, PDRG1, UXT and URI1 as well as ASDURF, POLR2E and DNAAF10/WDR92. Interacts with phosphorylated TELO2 and mediates interaction of TELO2 with the R2TP complex. Interacts with phosphorylated ECD, EFTUD2/SNRP116, RPB1 and UBR5 and with RPB1 in a phosphorylation-independent manner. Interacts with the core C/D box snoRNP particle components NOP58 and FBL and with RUVBL1/TIP49. Interacts with RPAP3 and DNAAF10. Interacts with histone H4 and with SWI/SNF complex member SMARCB1/SNF5. Interacts with the mTORC1 complex member RPTOR. Interacts with MSL1. Expressed at low levels in normal mammary epithelial cells (at protein level). Highest expression in lung, leukocyte and placenta. Expressed at lower levels in brain, prostate, colon, heart, small intestine, liver, ovary, pancreas, skeletal muscle, spleen, testis and thymus.

It is found in the nucleus. Functionally, involved in the assembly of C/D box small nucleolar ribonucleoprotein (snoRNP) particles. Recruits the SWI/SNF complex to the core promoter of rRNA genes and enhances pre-rRNA transcription. Mediates interaction of TELO2 with the R2TP complex which is necessary for the stability of MTOR and SMG1. Positively regulates the assembly and activity of the mTORC1 complex. The polypeptide is PIH1 domain-containing protein 1 (PIH1D1) (Homo sapiens (Human)).